A 398-amino-acid chain; its full sequence is Phospholipase C (398 aa).

The signal sequence occupies residues 1–28; that stretch reads MKRKICKALICATLATSLWAGASTKVYA. Residues Trp-29, His-39, Asp-84, His-96, His-154, Asp-158, His-164, His-176, and Glu-180 each coordinate Zn(2+). The Zn-dependent PLC domain maps to 29–278; it reads WDGKIDGTGT…HDVSEGNDPS (250 aa). A linker region spans residues 275-283; that stretch reads NDPSVGKNV. Positions 284 to 398 constitute a PLAT domain; that stretch reads KELVAYISTS…ISGNSTYNIK (115 aa). Ca(2+) is bound by residues Asp-297, Gly-299, Thr-300, Asp-301, Asp-321, Asn-322, Gly-324, Asn-325, Asp-326, Asp-364, and Ala-365.

The protein belongs to the bacterial zinc-metallophospholipase C family. It depends on Ca(2+) as a cofactor. The cofactor is Zn(2+).

It is found in the secreted. The enzyme catalyses a 1,2-diacyl-sn-glycero-3-phosphocholine + H2O = phosphocholine + a 1,2-diacyl-sn-glycerol + H(+). In terms of biological role, bacterial hemolysins are exotoxins that attack blood cell membranes and cause cell rupture. Constitutes an essential virulence factor in gas gangrene. Binds to eukaryotic membranes where it hydrolyzes both phosphatidylcholine and sphingomyelin. The diacylglycerol produced can activate both the arachidonic acid pathway, leading to modulation of the inflammatory response cascade and thrombosis, and protein kinase C, leading to activation of eukaryotic phospholipases and further membrane damage. Acts on human and mouse erythrocytes, but not on rabbit or horse erythrocytes. The chain is Phospholipase C (plc) from Clostridium perfringens (strain 13 / Type A).